The following is a 337-amino-acid chain: Anthraniloyl-CoA anthraniloyltransferase (337 aa).

Anthraniloyl-CoA is bound by residues threonine 29 and phenylalanine 33. The active-site Acyl-thioester intermediate is cysteine 113. Residues 154–155 (RN), 221–224 (MRGR), and histidine 258 contribute to the anthraniloyl-CoA site.

This sequence belongs to the thiolase-like superfamily. FabH family. As to quaternary structure, homodimer.

The protein resides in the cytoplasm. It carries out the reaction anthraniloyl-CoA + malonyl-CoA + H(+) = (2-aminobenzoyl)acetyl-CoA + CO2 + CoA. Its function is as follows. Required for the biosynthesis of a number of signaling molecules, such as the quinolone signal 2-heptyl-3-hydroxy-4(1H)-quinolone (PQS), 2-heptyl-4-hydroxyquinoline (HHQ) and 2,4-dihydroxyquinoline (DHQ). These molecules are required for normal biofilm formation. Catalyzes the transfer of the anthraniloyl moiety from anthraniloyl-CoA to malonyl-CoA to form 2-aminobenzoylacetyl-CoA. The first step of the reaction is the formation of a covalent anthraniloyl-PqsD intermediate. Next, the short-lived intermediate 3-(2-aminophenyl)-3-oxopropanoyl-CoA is formed. An intramolecular rearrangement of this intermediate can give rise to 2,4-dihydroxyquinoline (DHQ). In Pseudomonas aeruginosa (strain ATCC 15692 / DSM 22644 / CIP 104116 / JCM 14847 / LMG 12228 / 1C / PRS 101 / PAO1), this protein is Anthraniloyl-CoA anthraniloyltransferase (pqsD).